The sequence spans 151 residues: Ribosome maturation factor RimP (151 aa).

The protein belongs to the RimP family.

Its subcellular location is the cytoplasm. In terms of biological role, required for maturation of 30S ribosomal subunits. The protein is Ribosome maturation factor RimP of Hydrogenovibrio crunogenus (strain DSM 25203 / XCL-2) (Thiomicrospira crunogena).